Reading from the N-terminus, the 190-residue chain is Frataxin homolog, mitochondrial (190 aa).

The protein belongs to the frataxin family. As to quaternary structure, monomer (probable predominant form). Oligomer. Interacts with IscU. Component of the mitochondrial core iron-sulfur cluster (ISC) assembly complex at least composed of the cysteine desulfurase Nfs1, the scaffold protein IscU, the accessory protein bcn92/Isd11/Lyrm4, and probably fh/frataxin.

It localises to the mitochondrion. It carries out the reaction 4 Fe(2+) + O2 + 4 H(+) = 4 Fe(3+) + 2 H2O. In terms of biological role, promotes the biosynthesis of heme as well as the assembly and repair of iron-sulfur clusters by delivering Fe(2+) to proteins involved in these pathways. May play a role in the protection against iron-catalyzed oxidative stress through its ability to catalyze the oxidation of Fe(2+) to Fe(3+). May be able to store large amounts of the metal in the form of a ferrihydrite mineral by oligomerization. Required for ecdysteroidogenesis in the prothoracic gland which is necessary for larval to pupal transition. The polypeptide is Frataxin homolog, mitochondrial (Drosophila melanogaster (Fruit fly)).